The sequence spans 79 residues: Metallothionein-like protein type 2 (79 aa).

Belongs to the metallothionein superfamily. Type 15 family.

Its function is as follows. Metallothioneins have a high content of cysteine residues that bind various heavy metals. This is Metallothionein-like protein type 2 (MT1) from Malus domestica (Apple).